A 191-amino-acid polypeptide reads, in one-letter code: Sec-independent protein translocase protein TatB (191 aa).

A helical transmembrane segment spans residues 1-21; it reads MFDIGFSELFLILVIGLLVLG. A compositionally biased stretch (polar residues) spans 119 to 138; it reads ESTSQTLTEQLTPSEQVTEA. Disordered stretches follow at residues 119 to 139 and 168 to 191; these read ESTSQTLTEQLTPSEQVTEAT and DDDDEPVFASKVKPQTEEIQDKKA. Basic and acidic residues predominate over residues 181–191; sequence PQTEEIQDKKA.

This sequence belongs to the TatB family. The Tat system comprises two distinct complexes: a TatABC complex, containing multiple copies of TatA, TatB and TatC subunits, and a separate TatA complex, containing only TatA subunits. Substrates initially bind to the TatABC complex, which probably triggers association of the separate TatA complex to form the active translocon.

Its subcellular location is the cell inner membrane. Functionally, part of the twin-arginine translocation (Tat) system that transports large folded proteins containing a characteristic twin-arginine motif in their signal peptide across membranes. Together with TatC, TatB is part of a receptor directly interacting with Tat signal peptides. TatB may form an oligomeric binding site that transiently accommodates folded Tat precursor proteins before their translocation. This is Sec-independent protein translocase protein TatB from Pasteurella multocida (strain Pm70).